Reading from the N-terminus, the 689-residue chain is Protein SDA1 homolog (689 aa).

A coiled-coil region spans residues 254–319; sequence KKNTKNKKKL…RFEVKLMHMD (66 aa). 2 disordered regions span residues 485–512 and 606–689; these read EQEK…DGEW and KPKS…RLMK. Basic and acidic residues predominate over residues 668-681; sequence SFRDKQIALRDSLL.

This sequence belongs to the SDA1 family.

The protein localises to the nucleus. It localises to the nucleolus. Required for 60S pre-ribosomal subunits export to the cytoplasm. The chain is Protein SDA1 homolog (sdad1) from Xenopus tropicalis (Western clawed frog).